A 276-amino-acid polypeptide reads, in one-letter code: NAD-capped RNA hydrolase NudC (276 aa).

Substrate is bound at residue Arg82. Positions 112 and 115 each coordinate Zn(2+). Glu125 lines the substrate pocket. Zn(2+) contacts are provided by Cys130 and Cys133. Residue Tyr138 participates in substrate binding. The Nudix hydrolase domain maps to 139 to 262 (PRISPSMIVL…SIARYLIDLY (124 aa)). 3 residues coordinate a divalent metal cation: Ala172, Glu188, and Glu192. The Nudix box motif lies at 173–194 (GFAEPGESAEDCLVREVREEVA). 206–213 (QCWPFPHS) serves as a coordination point for substrate. Glu233 lines the a divalent metal cation pocket. Ala255 contributes to the substrate binding site.

The protein belongs to the Nudix hydrolase family. NudC subfamily. As to quaternary structure, homodimer. It depends on Mg(2+) as a cofactor. The cofactor is Mn(2+). Zn(2+) serves as cofactor.

The enzyme catalyses a 5'-end NAD(+)-phospho-ribonucleoside in mRNA + H2O = a 5'-end phospho-adenosine-phospho-ribonucleoside in mRNA + beta-nicotinamide D-ribonucleotide + 2 H(+). It carries out the reaction NAD(+) + H2O = beta-nicotinamide D-ribonucleotide + AMP + 2 H(+). The catalysed reaction is NADH + H2O = reduced beta-nicotinamide D-ribonucleotide + AMP + 2 H(+). In terms of biological role, mRNA decapping enzyme that specifically removes the nicotinamide adenine dinucleotide (NAD) cap from a subset of mRNAs by hydrolyzing the diphosphate linkage to produce nicotinamide mononucleotide (NMN) and 5' monophosphate mRNA. The NAD-cap is present at the 5'-end of some mRNAs and stabilizes RNA against 5'-processing. Has preference for mRNAs with a 5'-end purine. Catalyzes the hydrolysis of a broad range of dinucleotide pyrophosphates. The polypeptide is NAD-capped RNA hydrolase NudC (Pseudomonas putida (strain W619)).